Reading from the N-terminus, the 35-residue chain is Cupiennin-1b (35 aa).

At E35 the chain carries Glutamic acid 1-amide.

Belongs to the cationic peptide 04 (cupiennin) family. 01 subfamily. In terms of tissue distribution, expressed by the venom gland.

Its subcellular location is the secreted. Its function is as follows. Has antimicrobial activity against E.coli, E.faecalis, P.aeruginosa, and S.aureus. Has insecticidal and hemolytic activities. Probably acts by disturbing membrane function with its amphipathic structure. The chain is Cupiennin-1b from Cupiennius salei (American wandering spider).